The sequence spans 238 residues: Ribonuclease PH (238 aa).

Phosphate-binding positions include R86 and 124–126 (GTR).

Belongs to the RNase PH family. In terms of assembly, homohexameric ring arranged as a trimer of dimers.

It carries out the reaction tRNA(n+1) + phosphate = tRNA(n) + a ribonucleoside 5'-diphosphate. In terms of biological role, phosphorolytic 3'-5' exoribonuclease that plays an important role in tRNA 3'-end maturation. Removes nucleotide residues following the 3'-CCA terminus of tRNAs; can also add nucleotides to the ends of RNA molecules by using nucleoside diphosphates as substrates, but this may not be physiologically important. Probably plays a role in initiation of 16S rRNA degradation (leading to ribosome degradation) during starvation. In Enterobacter sp. (strain 638), this protein is Ribonuclease PH.